A 270-amino-acid chain; its full sequence is uncharacterized protein (270 aa).

Positions 53, 55, 83, 116, 207, and 209 each coordinate a divalent metal cation.

Belongs to the metallophosphoesterase superfamily. It depends on a divalent metal cation as a cofactor.

This is an uncharacterized protein from Bacillus subtilis (strain 168).